A 485-amino-acid chain; its full sequence is Glutamyl-tRNA(Gln) amidotransferase subunit A (485 aa).

Residues Lys76 and Ser155 each act as charge relay system in the active site. The active-site Acyl-ester intermediate is Ser179.

Belongs to the amidase family. GatA subfamily. In terms of assembly, heterotrimer of A, B and C subunits.

The enzyme catalyses L-glutamyl-tRNA(Gln) + L-glutamine + ATP + H2O = L-glutaminyl-tRNA(Gln) + L-glutamate + ADP + phosphate + H(+). Allows the formation of correctly charged Gln-tRNA(Gln) through the transamidation of misacylated Glu-tRNA(Gln) in organisms which lack glutaminyl-tRNA synthetase. The reaction takes place in the presence of glutamine and ATP through an activated gamma-phospho-Glu-tRNA(Gln). The polypeptide is Glutamyl-tRNA(Gln) amidotransferase subunit A (Marinobacter nauticus (strain ATCC 700491 / DSM 11845 / VT8) (Marinobacter aquaeolei)).